The sequence spans 335 residues: Dye-decolorizing peroxidase (335 aa).

Residue D149 is the Proton acceptor of the active site. A heme-binding site is contributed by H222. Positions 312–335 (LPQAATPTLAAGSLSIGSLKGSPR) are targeting peptide.

The protein belongs to the DyP-type peroxidase family. As to quaternary structure, homotetramer, presumably also in the encapsulin nanocompartment. Heme b is required as a cofactor.

It is found in the encapsulin nanocompartment. It carries out the reaction 2 a phenolic donor + H2O2 = 2 a phenolic radical donor + 2 H2O. Its function is as follows. Cargo of a type 1 encapsulin nanocompartment in situ; this cargo protects against oxidative stress at low pH. When expressed in the cytoplasm (absence of the encapsulin shell gene) it is almost as protective as the intact nanocompartment; its encapsulation has a modest yet significant effect on protection against oxidative stress at low pH. A heme-dependent peroxidase, it probably does not have deferrochelatase activity. Converts guaiacol and H2O2 to tetraguaiacol, also acts on 2,2'-azino-bis(3-ethylbenzothiazoline-6-sulfonic acid) (ABTS). Retains peroxidase activity when encapsulated but has a reduced set of substrates; acts on ABTS but not guaiacol. This chain is Dye-decolorizing peroxidase, found in Mycobacterium tuberculosis (strain ATCC 25618 / H37Rv).